Consider the following 434-residue polypeptide: Cysteine--tRNA ligase (434 aa).

Cys-28 contacts Zn(2+). A 'HIGH' region motif is present at residues 30–40; the sequence is PTVYDDIHIGN. Cys-207, His-232, and Glu-236 together coordinate Zn(2+). Positions 264–268 match the 'KMSKS' region motif; the sequence is KMSKS. An ATP-binding site is contributed by Lys-267.

Belongs to the class-I aminoacyl-tRNA synthetase family. Monomer. Zn(2+) serves as cofactor.

Its subcellular location is the cytoplasm. The catalysed reaction is tRNA(Cys) + L-cysteine + ATP = L-cysteinyl-tRNA(Cys) + AMP + diphosphate. In Acholeplasma laidlawii (strain PG-8A), this protein is Cysteine--tRNA ligase.